A 70-amino-acid polypeptide reads, in one-letter code: Putative membrane protein insertion efficiency factor (70 aa).

It belongs to the UPF0161 family.

The protein resides in the cell membrane. In terms of biological role, could be involved in insertion of integral membrane proteins into the membrane. The polypeptide is Putative membrane protein insertion efficiency factor (Chloroflexus aurantiacus (strain ATCC 29366 / DSM 635 / J-10-fl)).